The chain runs to 421 residues: UDP-N-acetylglucosamine 1-carboxyvinyltransferase (421 aa).

22–23 (KN) serves as a coordination point for phosphoenolpyruvate. Arg92 lines the UDP-N-acetyl-alpha-D-glucosamine pocket. The active-site Proton donor is Asp116. UDP-N-acetyl-alpha-D-glucosamine is bound by residues 121–125 (RPIDQ), Asp307, and Ile330.

This sequence belongs to the EPSP synthase family. MurA subfamily.

It is found in the cytoplasm. The catalysed reaction is phosphoenolpyruvate + UDP-N-acetyl-alpha-D-glucosamine = UDP-N-acetyl-3-O-(1-carboxyvinyl)-alpha-D-glucosamine + phosphate. It functions in the pathway cell wall biogenesis; peptidoglycan biosynthesis. In terms of biological role, cell wall formation. Adds enolpyruvyl to UDP-N-acetylglucosamine. The chain is UDP-N-acetylglucosamine 1-carboxyvinyltransferase from Lactobacillus johnsonii (strain CNCM I-12250 / La1 / NCC 533).